Reading from the N-terminus, the 619-residue chain is Polyadenylate-binding protein 1-like (619 aa).

4 consecutive RRM domains span residues 11 to 89 (ASLY…WSQR), 99 to 175 (GNIF…HFKS), 191 to 268 (TNIY…RAQK), and 294 to 370 (VNLY…LAQR). The interval 431–458 (PAPRWTSQPPRPSSAYPPGASMVRPPVV) is disordered. Residues 533–610 (QEPLTASMLA…AVAVLQAHQA (78 aa)) enclose the PABC domain.

Belongs to the polyadenylate-binding protein type-1 family. In terms of tissue distribution, expressed in ovary and testis. Also expressed in pancreas, liver and thymus, and at lower levels in other somatic tissues including brain and lung.

It is found in the cytoplasm. Poly(A)-binding protein involved in oocyte maturation and early embryo development. It is required for cytosolic mRNA polyadenylation and translational activation of maternally stored mRNA in oocytes. The polypeptide is Polyadenylate-binding protein 1-like (Homo sapiens (Human)).